Reading from the N-terminus, the 472-residue chain is Argininosuccinate lyase (472 aa).

This sequence belongs to the lyase 1 family. Argininosuccinate lyase subfamily.

It localises to the cytoplasm. It catalyses the reaction 2-(N(omega)-L-arginino)succinate = fumarate + L-arginine. It participates in amino-acid biosynthesis; L-arginine biosynthesis; L-arginine from L-ornithine and carbamoyl phosphate: step 3/3. The protein is Argininosuccinate lyase of Rhodococcus jostii (strain RHA1).